The chain runs to 147 residues: Hemoglobin subunit beta (147 aa).

Valine 2 carries the post-translational modification N-acetylvaline. One can recognise a Globin domain in the interval 3–147 (HLTPEEKSAV…VANALAHKYH (145 aa)). Threonine 13 carries the phosphothreonine modification. Serine 45 is subject to Phosphoserine. Lysine 60 is subject to N6-acetyllysine. Residue histidine 64 coordinates heme b. Lysine 83 is subject to N6-acetyllysine. Residue histidine 93 participates in heme b binding. Position 94 is an S-nitrosocysteine (cysteine 94). Lysine 145 is subject to N6-acetyllysine.

The protein belongs to the globin family. Heterotetramer of two alpha chains and two beta chains in adult hemoglobin A (HbA). Red blood cells.

Involved in oxygen transport from the lung to the various peripheral tissues. This is Hemoglobin subunit beta (HBB) from Pan paniscus (Pygmy chimpanzee).